A 177-amino-acid chain; its full sequence is Large ribosomal subunit protein uL6 (177 aa).

It belongs to the universal ribosomal protein uL6 family. In terms of assembly, part of the 50S ribosomal subunit.

In terms of biological role, this protein binds to the 23S rRNA, and is important in its secondary structure. It is located near the subunit interface in the base of the L7/L12 stalk, and near the tRNA binding site of the peptidyltransferase center. The protein is Large ribosomal subunit protein uL6 of Rickettsia rickettsii (strain Iowa).